The chain runs to 123 residues: MGLQETIGIEIVSVEKGKAVVQLEVTEKVHQPFGYLHGGVSVVLAEHAASIGAAKSIEPDEIVFGLEINANHLASKQAGLVTATAEAIHIGKSTQVWEIKITDETEKLLCISRCTIAVKKKRK.

Glu46 (nucleophile or proton acceptor) is an active-site residue.

The protein belongs to the thioesterase PaaI family.

It catalyses the reaction 1,4-dihydroxy-2-naphthoyl-CoA + H2O = 1,4-dihydroxy-2-naphthoate + CoA + H(+). The protein operates within quinol/quinone metabolism; menaquinone biosynthesis. Functionally, catalyzes the hydrolysis of 1,4-dihydroxy-2-naphthoyl-CoA (DHNA-CoA) to 1,4-dihydroxy-2-naphthoate (DHNA) and free coenzyme A. Production of DHNA is required for protection against bacteriolysis in the cytosol of macrophages and tissue-specific virulence in vivo, suggesting that MenI is required to protect the bacteria from killing in the macrophage cytosol. This Listeria monocytogenes serotype 1/2a (strain 10403S) protein is 1,4-dihydroxy-2-naphthoyl-CoA hydrolase.